The chain runs to 235 residues: tRNA (guanine-N(1)-)-methyltransferase (235 aa).

Residues Gly112 and 132-137 (IGDYVL) each bind S-adenosyl-L-methionine.

It belongs to the RNA methyltransferase TrmD family. As to quaternary structure, homodimer.

The protein resides in the cytoplasm. It catalyses the reaction guanosine(37) in tRNA + S-adenosyl-L-methionine = N(1)-methylguanosine(37) in tRNA + S-adenosyl-L-homocysteine + H(+). Specifically methylates guanosine-37 in various tRNAs. The chain is tRNA (guanine-N(1)-)-methyltransferase from Cytophaga hutchinsonii (strain ATCC 33406 / DSM 1761 / CIP 103989 / NBRC 15051 / NCIMB 9469 / D465).